The chain runs to 249 residues: Triosephosphate isomerase (249 aa).

Position 9–11 (asparagine 9–lysine 11) interacts with substrate. The Electrophile role is filled by histidine 95. The Proton acceptor role is filled by glutamate 166. Substrate-binding positions include glycine 172, serine 211, and glycine 232–glycine 233.

The protein belongs to the triosephosphate isomerase family. As to quaternary structure, homodimer.

The protein resides in the cytoplasm. The enzyme catalyses D-glyceraldehyde 3-phosphate = dihydroxyacetone phosphate. It participates in carbohydrate biosynthesis; gluconeogenesis. The protein operates within carbohydrate degradation; glycolysis; D-glyceraldehyde 3-phosphate from glycerone phosphate: step 1/1. Involved in the gluconeogenesis. Catalyzes stereospecifically the conversion of dihydroxyacetone phosphate (DHAP) to D-glyceraldehyde-3-phosphate (G3P). The sequence is that of Triosephosphate isomerase from Legionella pneumophila (strain Paris).